The chain runs to 177 residues: Large ribosomal subunit protein uL5 (177 aa).

The protein belongs to the universal ribosomal protein uL5 family. As to quaternary structure, part of the 50S ribosomal subunit; part of the 5S rRNA/L5/L18/L25 subcomplex. Contacts the 5S rRNA and the P site tRNA. Forms a bridge to the 30S subunit in the 70S ribosome.

Its function is as follows. This is one of the proteins that bind and probably mediate the attachment of the 5S RNA into the large ribosomal subunit, where it forms part of the central protuberance. In the 70S ribosome it contacts protein S13 of the 30S subunit (bridge B1b), connecting the 2 subunits; this bridge is implicated in subunit movement. Contacts the P site tRNA; the 5S rRNA and some of its associated proteins might help stabilize positioning of ribosome-bound tRNAs. The chain is Large ribosomal subunit protein uL5 from Wolbachia pipientis wMel.